The chain runs to 547 residues: Chaperonin GroEL (547 aa).

Residues 30–33 (TLGP), Lys-51, 87–91 (DGTTT), Gly-415, and Asp-495 contribute to the ATP site. Residues 526 to 547 (KKESAGGGGMPGGMGGMGGMDF) form a disordered region. Over residues 530-547 (AGGGGMPGGMGGMGGMDF) the composition is skewed to gly residues.

It belongs to the chaperonin (HSP60) family. Forms a cylinder of 14 subunits composed of two heptameric rings stacked back-to-back. Interacts with the co-chaperonin GroES.

The protein resides in the cytoplasm. The enzyme catalyses ATP + H2O + a folded polypeptide = ADP + phosphate + an unfolded polypeptide.. Functionally, together with its co-chaperonin GroES, plays an essential role in assisting protein folding. The GroEL-GroES system forms a nano-cage that allows encapsulation of the non-native substrate proteins and provides a physical environment optimized to promote and accelerate protein folding. The protein is Chaperonin GroEL of Hyphomonas neptunium (strain ATCC 15444).